A 161-amino-acid polypeptide reads, in one-letter code: Ribonuclease P protein component 2 (161 aa).

It belongs to the eukaryotic/archaeal RNase P protein component 2 family. Consists of a catalytic RNA component and at least 4-5 protein subunits.

It localises to the cytoplasm. The catalysed reaction is Endonucleolytic cleavage of RNA, removing 5'-extranucleotides from tRNA precursor.. In terms of biological role, part of ribonuclease P, a protein complex that generates mature tRNA molecules by cleaving their 5'-ends. In Natronomonas pharaonis (strain ATCC 35678 / DSM 2160 / CIP 103997 / JCM 8858 / NBRC 14720 / NCIMB 2260 / Gabara) (Halobacterium pharaonis), this protein is Ribonuclease P protein component 2.